Consider the following 76-residue polypeptide: Toxin Acra III-2 (76 aa).

One can recognise an LCN-type CS-alpha/beta domain in the interval 3–67; it reads VPGNYPLNTY…IWDAVKNHCT (65 aa). Cystine bridges form between cysteine 18/cysteine 41, cysteine 27/cysteine 46, and cysteine 31/cysteine 48.

The protein belongs to the long (3 C-C) scorpion toxin superfamily. Sodium channel inhibitor family. Beta subfamily. In terms of tissue distribution, expressed by the venom gland.

It localises to the secreted. Binds to sodium channels (Nav) and affects the channel activation process. In Androctonus crassicauda (Arabian fat-tailed scorpion), this protein is Toxin Acra III-2.